Reading from the N-terminus, the 537-residue chain is Fucosyltransferase 6 (537 aa).

Over 1–20 (MYHIFQISSEVFRAFGLKMK) the chain is Cytoplasmic. The chain crosses the membrane as a helical; Signal-anchor for type II membrane protein span at residues 21–41 (ILLTLVFSGLLIWSVVLVSFS). At 42-537 (NDFNNQLLVA…NDGLKLFDEL (496 aa)) the chain is on the lumenal side. Residues Asn54, Asn231, and Asn378 are each glycosylated (N-linked (GlcNAc...) asparagine).

This sequence belongs to the glycosyltransferase 37 family. Expressed in roots and flowers.

The protein resides in the golgi apparatus. It is found in the golgi stack membrane. The protein operates within protein modification; protein glycosylation. Its function is as follows. May be involved in cell wall biosynthesis. May act as a fucosyltransferase. The sequence is that of Fucosyltransferase 6 (FUT6) from Arabidopsis thaliana (Mouse-ear cress).